Consider the following 285-residue polypeptide: Ribosomal RNA small subunit methyltransferase I (285 aa).

This sequence belongs to the methyltransferase superfamily. RsmI family.

Its subcellular location is the cytoplasm. It catalyses the reaction cytidine(1402) in 16S rRNA + S-adenosyl-L-methionine = 2'-O-methylcytidine(1402) in 16S rRNA + S-adenosyl-L-homocysteine + H(+). Its function is as follows. Catalyzes the 2'-O-methylation of the ribose of cytidine 1402 (C1402) in 16S rRNA. This Mycobacterium tuberculosis (strain ATCC 25618 / H37Rv) protein is Ribosomal RNA small subunit methyltransferase I.